The chain runs to 346 residues: MNTQLFSPFTIQNVTLKNRIVMSPMCMYSSENEDGKVTNFHLIHYGTRAMGQVGLVMLEATAVAAEGRISNKDLGIWNDEHIEGLQKTVSFIKEHDSKAAIQLAHAGRKAELHTDPVAPSAIPFNDKMKVPVAMSKEQIQDTITAFQKAAIRSKQAGFDVIELHGAHGYLINEFLSPLSNKRTDEYGGTAENRYRFLREIIHAVKEVWEGPLFVRISADDYHPEGLTVNDYVQFAKWMKEQGVDLIDCSSGAVVPAHIDVYPGYQVKYAKHLKEHAQIATGAVGLITSGVQAEQILVNSEADLIFVGRELLRNPYFPRTAANELGFELKDPHQYSRAPGKIANTSK.

An FMN-binding site is contributed by 23 to 26 (SPMC). A substrate-binding site is contributed by tyrosine 28. Residues alanine 60 and glutamine 102 each coordinate FMN. 164–167 (HGAH) is a substrate binding site. FMN is bound by residues arginine 215 and 307 to 308 (GR).

Belongs to the NADH:flavin oxidoreductase/NADH oxidase family. NamA subfamily. In terms of assembly, homotetramer. Requires FMN as cofactor.

It carries out the reaction A + NADPH + H(+) = AH2 + NADP(+). Its function is as follows. Catalyzes the reduction of the double bond of an array of alpha,beta-unsaturated aldehydes and ketones. It also reduces the nitro group of nitroester and nitroaromatic compounds. It could have a role in detoxification processes. This chain is NADPH dehydrogenase, found in Bacillus cytotoxicus (strain DSM 22905 / CIP 110041 / 391-98 / NVH 391-98).